We begin with the raw amino-acid sequence, 205 residues long: Holliday junction branch migration complex subunit RuvA (205 aa).

Residues 1 to 64 (MIGRLSGILV…EDAQLLYGFI (64 aa)) are domain I. Positions 65–143 (TKQERALFRL…SLLEASAGSE (79 aa)) are domain II. The tract at residues 144–156 (REFMLQSNYTPAA) is flexible linker. Positions 157 to 205 (AVDSAEEDAISALLSLGYKPAQASKSVSAAFKEGMSSETLIKAALKSML) are domain III.

Belongs to the RuvA family. Homotetramer. Forms an RuvA(8)-RuvB(12)-Holliday junction (HJ) complex. HJ DNA is sandwiched between 2 RuvA tetramers; dsDNA enters through RuvA and exits via RuvB. An RuvB hexamer assembles on each DNA strand where it exits the tetramer. Each RuvB hexamer is contacted by two RuvA subunits (via domain III) on 2 adjacent RuvB subunits; this complex drives branch migration. In the full resolvosome a probable DNA-RuvA(4)-RuvB(12)-RuvC(2) complex forms which resolves the HJ.

It is found in the cytoplasm. Functionally, the RuvA-RuvB-RuvC complex processes Holliday junction (HJ) DNA during genetic recombination and DNA repair, while the RuvA-RuvB complex plays an important role in the rescue of blocked DNA replication forks via replication fork reversal (RFR). RuvA specifically binds to HJ cruciform DNA, conferring on it an open structure. The RuvB hexamer acts as an ATP-dependent pump, pulling dsDNA into and through the RuvAB complex. HJ branch migration allows RuvC to scan DNA until it finds its consensus sequence, where it cleaves and resolves the cruciform DNA. The protein is Holliday junction branch migration complex subunit RuvA of Shewanella frigidimarina (strain NCIMB 400).